A 239-amino-acid polypeptide reads, in one-letter code: tRNA (guanine-N(7)-)-methyltransferase (239 aa).

Residues E69, E94, D121, and D144 each contribute to the S-adenosyl-L-methionine site. The active site involves D144. Substrate is bound at residue K148. The segment at 150 to 155 is interaction with RNA; the sequence is RHNKRR. Substrate is bound by residues D180 and 217 to 220; that span reads TKFE.

This sequence belongs to the class I-like SAM-binding methyltransferase superfamily. TrmB family. In terms of assembly, monomer.

The enzyme catalyses guanosine(46) in tRNA + S-adenosyl-L-methionine = N(7)-methylguanosine(46) in tRNA + S-adenosyl-L-homocysteine. It participates in tRNA modification; N(7)-methylguanine-tRNA biosynthesis. In terms of biological role, catalyzes the formation of N(7)-methylguanine at position 46 (m7G46) in tRNA. This Shigella boydii serotype 4 (strain Sb227) protein is tRNA (guanine-N(7)-)-methyltransferase.